Reading from the N-terminus, the 361-residue chain is Septin-1 (361 aa).

Positions Lys32–Lys304 constitute a Septin-type G domain. The segment at Gly42–Ser49 is G1 motif. Residues Gly42–Ser49, Thr76, Gly102, Lys181–Glu189, Gly239, and Arg254 contribute to the GTP site. A G3 motif region spans residues Asp99–Gly102. Residues Ala180–Asp183 are G4 motif. Phosphoserine is present on Ser319.

The protein belongs to the TRAFAC class TrmE-Era-EngA-EngB-Septin-like GTPase superfamily. Septin GTPase family. In terms of assembly, likely part of a multicomponent septin complex that includes pnut. Interacts with pnut. Interacts with park. In terms of processing, ubiquitinated by park, leading to its degradation by the proteasome. In terms of tissue distribution, accumulates at the leading edge of the cleavage furrow in dividing cells and cellularizing embryos (at protein level). Also accumulates at the leading edge of the embryo epithelium during dorsal closure, in the embryonic neurons, and at the baso-lateral surfaces of ovarian follicle cells (at protein level).

The protein resides in the cytoplasm. Involved in cytokinesis. May be involved in p53-dependent apoptosis. The protein is Septin-1 of Drosophila melanogaster (Fruit fly).